The primary structure comprises 377 residues: Nitric oxide reductase FlRd-NAD(+) reductase (377 aa).

The protein belongs to the FAD-dependent oxidoreductase family. Requires FAD as cofactor.

The protein localises to the cytoplasm. The enzyme catalyses 2 reduced [nitric oxide reductase rubredoxin domain] + NAD(+) + H(+) = 2 oxidized [nitric oxide reductase rubredoxin domain] + NADH. It participates in nitrogen metabolism; nitric oxide reduction. In terms of biological role, one of at least two accessory proteins for anaerobic nitric oxide (NO) reductase. Reduces the rubredoxin moiety of NO reductase. This is Nitric oxide reductase FlRd-NAD(+) reductase from Citrobacter koseri (strain ATCC BAA-895 / CDC 4225-83 / SGSC4696).